The following is a 365-amino-acid chain: DNA replication and repair protein RecF (365 aa).

30-37 (GENGQGKT) contributes to the ATP binding site.

Belongs to the RecF family.

It is found in the cytoplasm. Its function is as follows. The RecF protein is involved in DNA metabolism; it is required for DNA replication and normal SOS inducibility. RecF binds preferentially to single-stranded, linear DNA. It also seems to bind ATP. The protein is DNA replication and repair protein RecF of Desulfitobacterium hafniense (strain DSM 10664 / DCB-2).